A 256-amino-acid polypeptide reads, in one-letter code: Pimeloyl-[acyl-carrier protein] methyl ester esterase (256 aa).

The AB hydrolase-1 domain maps to 15–242; it reads HLVLLHGWGL…AAHAPFISHP (228 aa). Substrate is bound by residues Trp22, 82-83, and 143-147; these read SL and FLALQ. Ser82 (nucleophile) is an active-site residue. Active-site residues include Asp207 and His235. Position 235 (His235) interacts with substrate.

Belongs to the AB hydrolase superfamily. Carboxylesterase BioH family. In terms of assembly, monomer.

Its subcellular location is the cytoplasm. The enzyme catalyses 6-carboxyhexanoyl-[ACP] methyl ester + H2O = 6-carboxyhexanoyl-[ACP] + methanol + H(+). Its pathway is cofactor biosynthesis; biotin biosynthesis. Its function is as follows. The physiological role of BioH is to remove the methyl group introduced by BioC when the pimeloyl moiety is complete. It allows to synthesize pimeloyl-ACP via the fatty acid synthetic pathway through the hydrolysis of the ester bonds of pimeloyl-ACP esters. This is Pimeloyl-[acyl-carrier protein] methyl ester esterase from Escherichia coli O139:H28 (strain E24377A / ETEC).